A 283-amino-acid polypeptide reads, in one-letter code: Putative cytochrome b-c1 complex subunit Rieske-like protein 1 (283 aa).

Residues 116–149 traverse the membrane as a helical segment; the sequence is TEARKGFSYLVTGVTTVGVAYAAKNAVTQFVSSM. Residues 196 to 281 enclose the Rieske domain; the sequence is EAAVELSQLR…YEFTSDDMVI (86 aa). C226, H228, C245, and H248 together coordinate [2Fe-2S] cluster. Cysteines 231 and 247 form a disulfide.

The protein belongs to the Rieske iron-sulfur protein family. [2Fe-2S] cluster serves as cofactor.

Its subcellular location is the membrane. The chain is Putative cytochrome b-c1 complex subunit Rieske-like protein 1 (UQCRFS1P1) from Homo sapiens (Human).